A 191-amino-acid polypeptide reads, in one-letter code: General negative regulator of transcription subunit 2 (191 aa).

It belongs to the CNOT2/3/5 family. Forms a NOT protein complex that comprises NOT1, NOT2, NOT3, NOT4 and NOT5. Subunit of the 1.0 MDa CCR4-NOT core complex that contains CCR4, CAF1, NOT1, NOT2, NOT3, NOT4, NOT5, CAF40 and CAF130. In the complex interacts with NOT1 and NOT5. The core complex probably is part of a less characterized 1.9 MDa CCR4-NOT complex.

The protein resides in the cytoplasm. It is found in the nucleus. Acts as a component of the CCR4-NOT core complex, which in the nucleus seems to be a general transcription factor, and in the cytoplasm the major mRNA deadenylase involved in mRNA turnover. NOT2 is required for the integrity of the complex. The NOT protein subcomplex negatively regulates the basal and activated transcription of many genes. Preferentially affects TC-type TATA element-dependent transcription. Could directly or indirectly inhibit component(s) of the general transcription machinery. The chain is General negative regulator of transcription subunit 2 (CDC36) from Saccharomyces cerevisiae (strain ATCC 204508 / S288c) (Baker's yeast).